The sequence spans 399 residues: Argininosuccinate synthase (399 aa).

ATP is bound by residues Ala8–Ser16 and Ala35. Residue Tyr87 participates in L-citrulline binding. ATP is bound at residue Gly117. The L-aspartate site is built by Thr119, Asn123, and Asp124. Asn123 provides a ligand contact to L-citrulline. Residues Arg127, Ser176, Ser185, Glu261, and Tyr273 each coordinate L-citrulline.

It belongs to the argininosuccinate synthase family. Type 1 subfamily. In terms of assembly, homotetramer.

It localises to the cytoplasm. The catalysed reaction is L-citrulline + L-aspartate + ATP = 2-(N(omega)-L-arginino)succinate + AMP + diphosphate + H(+). The protein operates within amino-acid biosynthesis; L-arginine biosynthesis; L-arginine from L-ornithine and carbamoyl phosphate: step 2/3. The polypeptide is Argininosuccinate synthase (Buchnera aphidicola subsp. Cinara cedri (strain Cc)).